The primary structure comprises 531 residues: SWI/SNF-related matrix-associated actin-dependent regulator of chromatin subfamily D member 2 (531 aa).

The segment at Ala20 to Ala85 is disordered. Residues Pro34–Pro45 show a composition bias toward low complexity. Asymmetric dimethylarginine occurs at positions 81 and 104. The interval Phe202 to Lys226 is disordered. Residue Ser203 is modified to Phosphoserine. At Thr217 the chain carries Phosphothreonine. A Glycyl lysine isopeptide (Lys-Gly) (interchain with G-Cter in SUMO2) cross-link involves residue Lys226. The SWIB/MDM2 domain occupies His306–His383.

The protein belongs to the SMARCD family. As to quaternary structure, component of the multiprotein chromatin-remodeling complexes SWI/SNF: SWI/SNF-A (BAF), SWI/SNF-B (PBAF) and related complexes. The canonical complex contains a catalytic subunit (either SMARCA4/BRG1/BAF190A or SMARCA2/BRM/BAF190B), and at least SMARCE1, ACTL6A/BAF53, SMARCC1/BAF155, SMARCC2/BAF170, and SMARCB1/SNF5/BAF47. Other subunits specific to each of the complexes may also be present permitting several possible combinations developmentally and tissue specific. Component of the BAF complex, which includes at least actin (ACTB), ARID1A/BAF250A, ARID1B/BAF250B, SMARCA2/BRM, SMARCA4/BRG1, ACTL6A/BAF53, ACTL6B/BAF53B, SMARCE1/BAF57, SMARCC1/BAF155, SMARCC2/BAF170, SMARCB1/SNF5/INI1, and one or more SMARCD1/BAF60A, SMARCD2/BAF60B, or SMARCD3/BAF60C. In muscle cells, the BAF complex also contains DPF3. Component of the SWI/SNF-B (PBAF) chromatin remodeling complex, at least composed of SMARCA4/BRG1, SMARCB1/BAF47/SNF5, ACTL6A/BAF53A or ACTL6B/BAF53B, SMARCE1/BAF57, SMARCD1/BAF60A, SMARCD2/BAF60B, perhaps SMARCD3/BAF60C, SMARCC1/BAF155, SMARCC2/BAF170, PBRM1/BAF180, ARID2/BAF200 and actin (ACTB). Interacts with UNKL. Interacts with CEBPE. Post-translationally, ubiquitinated through a signaling process involving RAC1 and the RING finger protein UNKL.

The protein resides in the nucleus. Involved in transcriptional activation and repression of select genes by chromatin remodeling (alteration of DNA-nucleosome topology). Component of SWI/SNF chromatin remodeling complexes that carry out key enzymatic activities, changing chromatin structure by altering DNA-histone contacts within a nucleosome in an ATP-dependent manner. Critical regulator of myeloid differentiation, controlling granulocytopoiesis and the expression of genes involved in neutrophil granule formation. This Rattus norvegicus (Rat) protein is SWI/SNF-related matrix-associated actin-dependent regulator of chromatin subfamily D member 2 (Smarcd2).